We begin with the raw amino-acid sequence, 470 residues long: FRIGIDA-like protein 1 (470 aa).

The stretch at 336–369 forms a coiled coil; it reads KDQNLESEFTQEKVEERVEELEKNKALRKRNTTN. A disordered region spans residues 355–400; the sequence is ELEKNKALRKRNTTNPPKQEPQQKGKKRTRDCKNGSQVPVPSQQLL. Positions 388 to 400 are enriched in polar residues; it reads NGSQVPVPSQQLL.

Belongs to the Frigida family. As to quaternary structure, component of the transcription activator complex FRI-C composed of FRI, FRL1, SUF4, FLX and FES1. Interacts with FRI and SUF4. Expressed during seed development and in dry seed. Preferentially expressed in the chalazal endosperm during early stages of seed development.

Required for FRI-mediated up-regulation of FLC transcripts, but not redundant with FRI and only partially redundant with FRL2. Required for the stabilization of the FRI-C complex. The polypeptide is FRIGIDA-like protein 1 (FRL1) (Arabidopsis thaliana (Mouse-ear cress)).